We begin with the raw amino-acid sequence, 156 residues long: Ribosomal RNA large subunit methyltransferase H (156 aa).

S-adenosyl-L-methionine is bound by residues leucine 73, glycine 104, and 123 to 128 (LSALTL).

The protein belongs to the RNA methyltransferase RlmH family. As to quaternary structure, homodimer.

It is found in the cytoplasm. The enzyme catalyses pseudouridine(1915) in 23S rRNA + S-adenosyl-L-methionine = N(3)-methylpseudouridine(1915) in 23S rRNA + S-adenosyl-L-homocysteine + H(+). Specifically methylates the pseudouridine at position 1915 (m3Psi1915) in 23S rRNA. In Shewanella sp. (strain ANA-3), this protein is Ribosomal RNA large subunit methyltransferase H.